Reading from the N-terminus, the 305-residue chain is Tetraspanin-12 (305 aa).

Over 1–12 (MAREDSVKCLRC) the chain is Cytoplasmic. 2 S-palmitoyl cysteine lipidation sites follow: C9 and C12. The helical transmembrane segment at 13-33 (LLYALNLLFWLMSISVLAVSA) threads the bilayer. Residues 34 to 59 (WMRDYLNNVLTLTAETRVEEAVILTY) are Extracellular-facing. Residues 60–80 (FPVVHPVMIAVCCFLIIVGML) traverse the membrane as a helical segment. Residues 81 to 89 (GYCGTVKRN) are Cytoplasmic-facing. The S-palmitoyl cysteine moiety is linked to residue C83. A helical membrane pass occupies residues 90-110 (LLLLAWYFGSLLVIFCVELAC). Over 111–224 (GVWTYEQEIM…RGTKQLQVLR (114 aa)) the chain is Extracellular. The chain crosses the membrane as a helical span at residues 225 to 245 (FLGISIGVTQILAMILTITLL). The Cytoplasmic portion of the chain corresponds to 246 to 305 (WALYYDRREPGTDQMMALKNDTTQHLPCHSVELLKPSLSRIFEHTSMANSFNTHFEMEEL).

This sequence belongs to the tetraspanin (TM4SF) family. Component of a complex, at least composed of TSPAN12, FZD4 and norrin (NDP). Interacts (when palmitoylated) with ADAM10. Interacts with MMP14/MT1-MMP. Post-translationally, palmitoylated; required for interaction with ADAM10. The precise position of palmitoylated residues is unclear and occurs either on Cys-9, Cys-12 and/or Cys-83.

It is found in the cell membrane. Functionally, regulator of cell surface receptor signal transduction. Plays a central role in retinal vascularization by regulating norrin (NDP) signal transduction. Acts in concert with norrin (NDP) to promote FZD4 multimerization and subsequent activation of FZD4, leading to promote accumulation of beta-catenin (CTNNB1) and stimulate LEF/TCF-mediated transcriptional programs. Suprisingly, it only activates the norrin (NDP)-dependent activation of FZD4, while it does not activate the Wnt-dependent activation of FZD4, suggesting the existence of a Wnt-independent signaling that also promote accumulation the beta-catenin (CTNNB1). Acts as a regulator of membrane proteinases such as ADAM10 and MMP14/MT1-MMP. Activates ADAM10-dependent cleavage activity of amyloid precursor protein (APP). Activates MMP14/MT1-MMP-dependent cleavage activity. This Bos taurus (Bovine) protein is Tetraspanin-12 (TSPAN12).